The sequence spans 205 residues: MFLRHCITFTMIALLAGCAGFGSREALQGHGDPQQWRAHKAQLSSLDGWQINGKVGIRAPRDSGSGTLFWLQRQDYYDIRLAGPLGRGAARLTGRPGGVVLEVANQGRYEATSPEALLEEQLGWQLPVSHLVWWVRGLPAPDSKSKLTLDGDSRLASLDQDGWQVQYLSYTEQNGYWLPERLKLHGKDLDVTLVVKDWQPRQLGH.

An N-terminal signal peptide occupies residues 1–17 (MFLRHCITFTMIALLAG). The N-palmitoyl cysteine moiety is linked to residue Cys18. Residue Cys18 is the site of S-diacylglycerol cysteine attachment.

It belongs to the LolB family. Monomer.

The protein localises to the cell outer membrane. Its function is as follows. Plays a critical role in the incorporation of lipoproteins in the outer membrane after they are released by the LolA protein. The sequence is that of Outer-membrane lipoprotein LolB from Pseudomonas putida (strain ATCC 700007 / DSM 6899 / JCM 31910 / BCRC 17059 / LMG 24140 / F1).